A 322-amino-acid chain; its full sequence is tRNA uridine(34) hydroxylase (322 aa).

The region spanning 125–219 (QDPNTIVIDA…YGKDPEVQGK (95 aa)) is the Rhodanese domain. Cys-179 (cysteine persulfide intermediate) is an active-site residue.

Belongs to the TrhO family.

It catalyses the reaction uridine(34) in tRNA + AH2 + O2 = 5-hydroxyuridine(34) in tRNA + A + H2O. Functionally, catalyzes oxygen-dependent 5-hydroxyuridine (ho5U) modification at position 34 in tRNAs. In Bacillus subtilis (strain 168), this protein is tRNA uridine(34) hydroxylase.